The following is a 420-amino-acid chain: Protein disulfide isomerase Creld1 (420 aa).

Residues 1-29 (MAPLPPRGLVPSLLWCLSLFLSLPGPVWL) form the signal peptide. Residues 30–362 (QPSPPPHPSP…GFFAEMTEDE (333 aa)) lie on the Extracellular side of the membrane. The short motif at 46–49 (CHTC) is the CXXC element. Cystine bridges form between cysteine 46-cysteine 49, cysteine 155-cysteine 169, cysteine 163-cysteine 181, and cysteine 183-cysteine 192. Positions 153-193 (LPCPGGTERPCGGYGQCEGEGTRGGSGHCDCQAGYGGEACG) constitute an EGF-like 1 domain. An N-linked (GlcNAc...) asparagine glycan is attached at asparagine 205. FU repeat units lie at residues 208 to 255 (HLVC…EQAT) and 268 to 315 (SYEC…VVCP). The CXXC signature appears at 278-281 (CLGC). Cystine bridges form between cysteine 278-cysteine 281, cysteine 309-cysteine 321, cysteine 314-cysteine 330, and cysteine 332-cysteine 343. Residues 305 to 342 (DVDECETVVCPGENEKCENTEGGYRCVCAEGYRQEDGI) enclose the EGF-like 2; calcium-binding domain. A helical transmembrane segment spans residues 363 to 383 (MVVLQQMFFGVIICALATLAA). Position 384 (lysine 384) is a topological domain, cytoplasmic. Residues 385–405 (GDLVFTAIFIGAVAAMTGYWL) form a helical membrane-spanning segment. The Extracellular segment spans residues 406-420 (SERSDRVLEGFIKGR).

This sequence belongs to the CRELD family. As to expression, expressed in myoblast C2C12 cells (at protein level).

It is found in the membrane. It catalyses the reaction Catalyzes the rearrangement of -S-S- bonds in proteins.. Its function is as follows. Protein disulfide isomerase. Promotes the localization of acetylcholine receptors (AChRs) to the plasma membrane. The protein is Protein disulfide isomerase Creld1 (Creld1) of Mus musculus (Mouse).